Consider the following 183-residue polypeptide: Adenine phosphoribosyltransferase (183 aa).

Belongs to the purine/pyrimidine phosphoribosyltransferase family. As to quaternary structure, homodimer.

It is found in the cytoplasm. The enzyme catalyses AMP + diphosphate = 5-phospho-alpha-D-ribose 1-diphosphate + adenine. The protein operates within purine metabolism; AMP biosynthesis via salvage pathway; AMP from adenine: step 1/1. Functionally, catalyzes a salvage reaction resulting in the formation of AMP, that is energically less costly than de novo synthesis. The chain is Adenine phosphoribosyltransferase from Salmonella paratyphi C (strain RKS4594).